The following is a 135-amino-acid chain: Allatotropins (135 aa).

The signal sequence occupies residues 1–22; that stretch reads MNFSMHLVLAVAAAACLCVVTA. The residue at position 51 (Phe-51) is a Phenylalanine amide. Residues 55 to 135 constitute a propeptide that is removed on maturation; sequence DRPHTRAELY…SSEELLRNVA (81 aa).

As to expression, allatotropin: Expressed in corpora cardiaca (CC), corpora allata (CA), antennal lobe (AL) and gnathal ganglion (GNG) (protein level). Expression in AL detected in all animals, expression in GNG detected in most animals and expression in CA and CC detected in few animals (at protein level). Allatotropin-PP-1: Expressed in corpora cardiaca (CC), corpora allata (CA), antennal lobe (AL) and gnathal ganglion (GNG) (at protein level). Expression in AL detected in all animals and expression in GNG, CA and CC detected in some animals (at protein level).

It is found in the secreted. Functionally, neuropeptide stimulator of juvenile hormone synthesis. This chain is Allatotropins, found in Agrotis ipsilon (Black cutworm moth).